The sequence spans 391 residues: Elongation factor Tu (391 aa).

The region spanning 10–201 (KPHVNIGTIG…AVDEYIPTPA (192 aa)) is the tr-type G domain. The tract at residues 19–26 (GHVDHGKT) is G1. Residue 19 to 26 (GHVDHGKT) participates in GTP binding. Threonine 26 is a binding site for Mg(2+). Positions 55-59 (GITIS) are G2. Residues 76 to 79 (DCPG) are G3. GTP is bound by residues 76-80 (DCPGH) and 131-134 (NKVD). The tract at residues 131–134 (NKVD) is G4. Residues 169 to 171 (SAL) form a G5 region.

The protein belongs to the TRAFAC class translation factor GTPase superfamily. Classic translation factor GTPase family. EF-Tu/EF-1A subfamily. Monomer.

It is found in the cytoplasm. It carries out the reaction GTP + H2O = GDP + phosphate + H(+). In terms of biological role, GTP hydrolase that promotes the GTP-dependent binding of aminoacyl-tRNA to the A-site of ribosomes during protein biosynthesis. The protein is Elongation factor Tu of Jannaschia sp. (strain CCS1).